The chain runs to 160 residues: Cyclic pyranopterin monophosphate synthase (160 aa).

Substrate contacts are provided by residues 74–76 (LSH) and 112–113 (ME). Asp-127 is an active-site residue.

The protein belongs to the MoaC family. As to quaternary structure, homohexamer; trimer of dimers.

The catalysed reaction is (8S)-3',8-cyclo-7,8-dihydroguanosine 5'-triphosphate = cyclic pyranopterin phosphate + diphosphate. It functions in the pathway cofactor biosynthesis; molybdopterin biosynthesis. Catalyzes the conversion of (8S)-3',8-cyclo-7,8-dihydroguanosine 5'-triphosphate to cyclic pyranopterin monophosphate (cPMP). In Geotalea uraniireducens (strain Rf4) (Geobacter uraniireducens), this protein is Cyclic pyranopterin monophosphate synthase.